The chain runs to 173 residues: Crossover junction endodeoxyribonuclease RuvC (173 aa).

Catalysis depends on residues D8, E67, and D139. Mg(2+) contacts are provided by D8, E67, and D139.

The protein belongs to the RuvC family. In terms of assembly, homodimer which binds Holliday junction (HJ) DNA. The HJ becomes 2-fold symmetrical on binding to RuvC with unstacked arms; it has a different conformation from HJ DNA in complex with RuvA. In the full resolvosome a probable DNA-RuvA(4)-RuvB(12)-RuvC(2) complex forms which resolves the HJ. The cofactor is Mg(2+).

It localises to the cytoplasm. The enzyme catalyses Endonucleolytic cleavage at a junction such as a reciprocal single-stranded crossover between two homologous DNA duplexes (Holliday junction).. In terms of biological role, the RuvA-RuvB-RuvC complex processes Holliday junction (HJ) DNA during genetic recombination and DNA repair. Endonuclease that resolves HJ intermediates. Cleaves cruciform DNA by making single-stranded nicks across the HJ at symmetrical positions within the homologous arms, yielding a 5'-phosphate and a 3'-hydroxyl group; requires a central core of homology in the junction. The consensus cleavage sequence is 5'-(A/T)TT(C/G)-3'. Cleavage occurs on the 3'-side of the TT dinucleotide at the point of strand exchange. HJ branch migration catalyzed by RuvA-RuvB allows RuvC to scan DNA until it finds its consensus sequence, where it cleaves and resolves the cruciform DNA. This chain is Crossover junction endodeoxyribonuclease RuvC, found in Shewanella loihica (strain ATCC BAA-1088 / PV-4).